A 442-amino-acid chain; its full sequence is NAD(P)H sulfur oxidoreductase (CoA-dependent) (442 aa).

FAD is bound at residue 13-14 (AA). CoA is bound at residue arginine 24. Residues 35 to 36 (EA) and 42 to 44 (HAP) each bind FAD. Residues 41–45 (SHAPC), 62–63 (HY), and arginine 72 each bind CoA. Residue cysteine 45 is the Redox-active of the active site. 3 residues coordinate FAD: valine 82, aspartate 280, and alanine 298. Asparagine 302 and lysine 358 together coordinate CoA. Residue tyrosine 422 participates in FAD binding. Tryptophan 430 and arginine 438 together coordinate CoA.

This sequence belongs to the class-III pyridine nucleotide-disulfide oxidoreductase family. In terms of assembly, homodimer. FAD serves as cofactor.

The protein resides in the cytoplasm. The enzyme catalyses hydrogen sulfide + NADP(+) = sulfur + NADPH. It carries out the reaction hydrogen sulfide + NAD(+) = sulfur + NADH. It catalyses the reaction NADP(+) + 2 CoA = CoA-disulfide + NADPH + H(+). The catalysed reaction is NAD(+) + 2 CoA = CoA-disulfide + NADH + H(+). In terms of biological role, catalyzes the CoA-dependent reduction of elemental sulfur (S(0)) to produce hydrogen sulfide. Can use both NADPH and NADH, but shows a preference for NADPH. May enable S(0) to be used, via sulfide, for iron-sulfur cluster synthesis by SipA. Also shows coenzyme A disulfide reductase (CoADR) activity with both NADH and NADPH. However, CoADR specific activity is about 20-fold lower than the sulfur reduction assay and CoADR activity appears to be an artifactual side reaction and is not thought to have any physiological relevance. Also shows NAD(P)H oxidase activity with both NADH and NADPH. The polypeptide is NAD(P)H sulfur oxidoreductase (CoA-dependent) (Pyrococcus furiosus (strain ATCC 43587 / DSM 3638 / JCM 8422 / Vc1)).